The chain runs to 505 residues: AMP phosphorylase (505 aa).

Residues G170, 196–201, and T205 each bind AMP; that span reads SRAITS. Catalysis depends on D258, which acts as the Proton donor. AMP contacts are provided by S266 and K290.

Belongs to the thymidine/pyrimidine-nucleoside phosphorylase family. Type 2 subfamily.

The enzyme catalyses AMP + phosphate = alpha-D-ribose 1,5-bisphosphate + adenine. The catalysed reaction is CMP + phosphate = cytosine + alpha-D-ribose 1,5-bisphosphate. It catalyses the reaction UMP + phosphate = alpha-D-ribose 1,5-bisphosphate + uracil. In terms of biological role, catalyzes the conversion of AMP and phosphate to adenine and ribose 1,5-bisphosphate (R15P). Exhibits phosphorylase activity toward CMP and UMP in addition to AMP. Functions in an archaeal AMP degradation pathway, together with R15P isomerase and RubisCO. The protein is AMP phosphorylase of Methanococcus maripaludis (strain C7 / ATCC BAA-1331).